Reading from the N-terminus, the 406-residue chain is Nodal homolog (406 aa).

An N-terminal signal peptide occupies residues 1-18 (MAFLTAVLYLGFACISQG). A propeptide spanning residues 19–281 (LPTWPDRVES…RVPGIRRHRR (263 aa)) is cleaved from the precursor. N-linked (GlcNAc...) asparagine glycosylation is found at Asn-71, Asn-136, and Asn-172. The tract at residues 195-222 (KERAERGSGMSNAEFIDAPGPSQQYNPH) is disordered. 3 disulfides stabilise this stretch: Cys-306-Cys-372, Cys-335-Cys-403, and Cys-339-Cys-405. Asn-344 carries N-linked (GlcNAc...) asparagine glycosylation.

This sequence belongs to the TGF-beta family. As to quaternary structure, homodimer; disulfide-linked. Interacts with, and is inhibited by cer1 and gdf10/bmp3b. As to expression, in the first phase of expression, localized to the vegetal region of the blastula. During gastrulation (stage 10.5), this expression disappears and instead becomes localized to the dorsal marginal zone, with enrichment in the organizer. During the second phase of expression in neurulae and tailbud embryos, expression restarts firstly in two symmetric patches near the posterior end of the notochord, and then in a large asymmetrical domain in the left lateral plate mesoderm.

The protein localises to the secreted. Its function is as follows. Cooperation and regulatory loops of multiple nodals are essential for mesendoderm patterning in early embryos. Essential for mesoderm formation and axial patterning during embryonic development. Activates the activin-like signaling pathway to induce dorsal and ventral mesoderm in animal cap ectoderm. In addition, also dorsalizes ventral marginal zone (VMZ) tissues during gastrulation. Acts in a downstream signaling cascade via cripto and cer1 to mediate cardiogenesis in embryonic mesoderm. Directs the orientation of the left-right axis by driving the left-specific gene cascade in the left lateral plate mesoderm. This chain is Nodal homolog, found in Xenopus laevis (African clawed frog).